A 416-amino-acid polypeptide reads, in one-letter code: Serine hydroxymethyltransferase (416 aa).

Residues leucine 118 and 122–124 contribute to the (6S)-5,6,7,8-tetrahydrofolate site; that span reads GHL. An N6-(pyridoxal phosphate)lysine modification is found at lysine 226. (6S)-5,6,7,8-tetrahydrofolate is bound by residues glutamate 242 and 350 to 352; that span reads SPF.

Belongs to the SHMT family. As to quaternary structure, homodimer. It depends on pyridoxal 5'-phosphate as a cofactor.

It is found in the cytoplasm. The enzyme catalyses (6R)-5,10-methylene-5,6,7,8-tetrahydrofolate + glycine + H2O = (6S)-5,6,7,8-tetrahydrofolate + L-serine. The protein operates within one-carbon metabolism; tetrahydrofolate interconversion. It functions in the pathway amino-acid biosynthesis; glycine biosynthesis; glycine from L-serine: step 1/1. Functionally, catalyzes the reversible interconversion of serine and glycine with tetrahydrofolate (THF) serving as the one-carbon carrier. This reaction serves as the major source of one-carbon groups required for the biosynthesis of purines, thymidylate, methionine, and other important biomolecules. Also exhibits THF-independent aldolase activity toward beta-hydroxyamino acids, producing glycine and aldehydes, via a retro-aldol mechanism. The protein is Serine hydroxymethyltransferase of Helicobacter pylori (strain Shi470).